The following is a 231-amino-acid chain: 7-cyano-7-deazaguanine synthase (231 aa).

An ATP-binding site is contributed by 7 to 17; it reads LSSGLDSVAAL. 4 residues coordinate Zn(2+): C195, C203, C206, and C209.

This sequence belongs to the QueC family. Requires Zn(2+) as cofactor.

It catalyses the reaction 7-carboxy-7-deazaguanine + NH4(+) + ATP = 7-cyano-7-deazaguanine + ADP + phosphate + H2O + H(+). The protein operates within purine metabolism; 7-cyano-7-deazaguanine biosynthesis. Catalyzes the ATP-dependent conversion of 7-carboxy-7-deazaguanine (CDG) to 7-cyano-7-deazaguanine (preQ(0)). The sequence is that of 7-cyano-7-deazaguanine synthase from Methanosarcina barkeri (strain Fusaro / DSM 804).